We begin with the raw amino-acid sequence, 270 residues long: Splicing factor YJU2 (270 aa).

Residues 1 to 32 (MSERKVLNKYIPPDYDPSIRPPKKKKKFQGPN) are disordered. Positions 48, 51, 84, and 87 each coordinate Zn(2+). Residues 251–270 (PNFQPPKYAKRKMEKKKVLV) are disordered. Basic residues predominate over residues 258-270 (YAKRKMEKKKVLV).

Belongs to the CWC16 family. YJU2 subfamily. In terms of assembly, component of the spliceosome. Present in the activated B complex, the catalytically activated B* complex which catalyzes the branching, the catalytic step 1 C complex catalyzing the exon ligation, and the postcatalytic P complex containing the ligated exons (mRNA) and the excised lariat intron. Belongs to the 40S cdc5-associated complex (or cwf complex), a spliceosome sub-complex reminiscent of a late-stage spliceosome composed of the U2, U5 and U6 snRNAs and at least brr2, cdc5, cwf2/prp3, cwf3/syf1, cwf4/syf3, cwf5/ecm2, spp42/cwf6, cwf7/spf27, cwf8, cwf9, cwf10, cwf11, cwf12, prp45/cwf13, cwf14, cwf15, cwf16, cwf17, cwf18, cwf19, cwf20, cwf21, cwf22, cwf23, cwf24, cwf25, cwf26, cyp7/cwf27, cwf28, cwf29/ist3, lea1, msl1, prp5/cwf1, prp10, prp12/sap130, prp17, prp22, sap61, sap62, sap114, sap145, slu7, smb1, smd1, smd3, smf1, smg1 and syf2.

The protein resides in the nucleus. Its function is as follows. Part of the spliceosome which catalyzes two sequential transesterification reactions, first the excision of the non-coding intron from pre-mRNA and then the ligation of the coding exons to form the mature mRNA. Plays a role in stabilizing the structure of the spliceosome catalytic core and docking of the branch helix into the active site, producing 5'-exon and lariat intron-3'-intermediates. In Schizosaccharomyces pombe (strain 972 / ATCC 24843) (Fission yeast), this protein is Splicing factor YJU2 (cwf16).